Reading from the N-terminus, the 740-residue chain is Arf-GAP with coiled-coil, ANK repeat and PH domain-containing protein 1 (740 aa).

The BAR domain maps to 1–226 (MTVKLDFEEC…RKELGTQLHN (226 aa)). The interval 1–382 (MTVKLDFEEC…RGPGQVSGYH (382 aa)) is required for formation of endosomal tubules when overexpressed with PIP5K1C. Residues 265 to 360 (GLVMEGHLFK…WVSAVQSSIA (96 aa)) form the PH domain. An Arf-GAP domain is found at 405-527 (GQVAAQVQSV…KFLTKLPEIR (123 aa)). The segment at 405 to 740 (GQVAAQVQSV…SRRSHDLHTL (336 aa)) is required for interaction with GULP1. The segment at 420 to 443 (CCDCREPAPEWASINLGVTLCIQC) adopts a C4-type zinc-finger fold. Residue Tyr485 is modified to 3'-nitrotyrosine. The interval 525-562 (EIRGRRGGRGPPRGHPPVPPKPPIRPHSGIVRSKSECP) is disordered. The segment at 525–566 (EIRGRRGGRGPPRGHPPVPPKPPIRPHSGIVRSKSECPSDDM) is prevents interaction with ITGB1 when S-554 is not phosphorylated. A compositionally biased stretch (pro residues) spans 537–549 (RGHPPVPPKPPIR). 3 ANK repeats span residues 606 to 635 (GNAT…NVNQ), 639 to 668 (AGRG…DLGA), and 672 to 702 (EGRD…EAEA).

As to quaternary structure, banana-shaped homodimer laterally assembling into tetramers, the tetramers further pack helically onto the membrane. Interacts with GTP-bound ARF6. Interacts with third cytoplasmic loop of SLC2A4/GLUT4. Interacts with CLTC. Interacts with GULP1. Forms a complex with GDP-bound ARF6 and GULP1. Interacts with ITGB1; required for ITGB1 recycling.

Its subcellular location is the recycling endosome membrane. With respect to regulation, GAP activity stimulated by phosphatidylinositol 4,5-bisphosphate (PIP2) and phosphatidic acid. Its function is as follows. GTPase-activating protein (GAP) for ADP ribosylation factor 6 (ARF6) required for clathrin-dependent export of proteins from recycling endosomes to trans-Golgi network and cell surface. Required for regulated export of ITGB1 from recycling endosomes to the cell surface and ITGB1-dependent cell migration. The sequence is that of Arf-GAP with coiled-coil, ANK repeat and PH domain-containing protein 1 (Acap1) from Mus musculus (Mouse).